The primary structure comprises 363 residues: UDP-N-acetylglucosamine--N-acetylmuramyl-(pentapeptide) pyrophosphoryl-undecaprenol N-acetylglucosamine transferase (363 aa).

UDP-N-acetyl-alpha-D-glucosamine is bound by residues 13–15 (TGG), asparagine 125, arginine 166, serine 195, isoleucine 249, 268–273 (ALTVSE), and glutamine 294.

This sequence belongs to the glycosyltransferase 28 family. MurG subfamily.

It localises to the cell inner membrane. It catalyses the reaction di-trans,octa-cis-undecaprenyl diphospho-N-acetyl-alpha-D-muramoyl-L-alanyl-D-glutamyl-meso-2,6-diaminopimeloyl-D-alanyl-D-alanine + UDP-N-acetyl-alpha-D-glucosamine = di-trans,octa-cis-undecaprenyl diphospho-[N-acetyl-alpha-D-glucosaminyl-(1-&gt;4)]-N-acetyl-alpha-D-muramoyl-L-alanyl-D-glutamyl-meso-2,6-diaminopimeloyl-D-alanyl-D-alanine + UDP + H(+). It participates in cell wall biogenesis; peptidoglycan biosynthesis. Its function is as follows. Cell wall formation. Catalyzes the transfer of a GlcNAc subunit on undecaprenyl-pyrophosphoryl-MurNAc-pentapeptide (lipid intermediate I) to form undecaprenyl-pyrophosphoryl-MurNAc-(pentapeptide)GlcNAc (lipid intermediate II). This chain is UDP-N-acetylglucosamine--N-acetylmuramyl-(pentapeptide) pyrophosphoryl-undecaprenol N-acetylglucosamine transferase, found in Cellvibrio japonicus (strain Ueda107) (Pseudomonas fluorescens subsp. cellulosa).